Reading from the N-terminus, the 256-residue chain is 4-hydroxy-tetrahydrodipicolinate reductase (256 aa).

Residues 12–17, Asp-39, 86–88, and 110–113 each bind NAD(+); these read GINGRV, GTT, and AANY. His-144 functions as the Proton donor/acceptor in the catalytic mechanism. Residue His-145 coordinates (S)-2,3,4,5-tetrahydrodipicolinate. Lys-148 acts as the Proton donor in catalysis. 154–155 contacts (S)-2,3,4,5-tetrahydrodipicolinate; sequence GT.

It belongs to the DapB family.

Its subcellular location is the cytoplasm. The catalysed reaction is (S)-2,3,4,5-tetrahydrodipicolinate + NAD(+) + H2O = (2S,4S)-4-hydroxy-2,3,4,5-tetrahydrodipicolinate + NADH + H(+). It catalyses the reaction (S)-2,3,4,5-tetrahydrodipicolinate + NADP(+) + H2O = (2S,4S)-4-hydroxy-2,3,4,5-tetrahydrodipicolinate + NADPH + H(+). The protein operates within amino-acid biosynthesis; L-lysine biosynthesis via DAP pathway; (S)-tetrahydrodipicolinate from L-aspartate: step 4/4. Functionally, catalyzes the conversion of 4-hydroxy-tetrahydrodipicolinate (HTPA) to tetrahydrodipicolinate. The polypeptide is 4-hydroxy-tetrahydrodipicolinate reductase (Gluconacetobacter diazotrophicus (strain ATCC 49037 / DSM 5601 / CCUG 37298 / CIP 103539 / LMG 7603 / PAl5)).